Consider the following 833-residue polypeptide: Leucine--tRNA ligase (833 aa).

Positions 41 to 52 (PYPSGAGLHVGH) match the 'HIGH' region motif. The 'KMSKS' region signature appears at 610 to 614 (KMSKS). Residue K613 participates in ATP binding.

The protein belongs to the class-I aminoacyl-tRNA synthetase family.

The protein localises to the cytoplasm. It carries out the reaction tRNA(Leu) + L-leucine + ATP = L-leucyl-tRNA(Leu) + AMP + diphosphate. This is Leucine--tRNA ligase from Streptococcus pyogenes serotype M5 (strain Manfredo).